The following is a 645-amino-acid chain: ATP-dependent zinc metalloprotease FtsH 3 (645 aa).

At 1–11 (MQNKRNQSRVL) the chain is on the cytoplasmic side. A helical membrane pass occupies residues 12–32 (WLLLIYITIGIFIYVGVNSLI). At 33-110 (GTPDVSKIEY…YVRSLENSWW (78 aa)) the chain is on the periplasmic side. Residues 111–131 (ISILTFLLPVFLLIFLFTFLF) traverse the membrane as a helical segment. Over 132–645 (RSSGGGANQG…ENNLIERKGI (514 aa)) the chain is Cytoplasmic. 202–209 (GEPGTGKT) provides a ligand contact to ATP. His424 serves as a coordination point for Zn(2+). The active site involves Glu425. Zn(2+)-binding residues include His428 and Asp501.

In the central section; belongs to the AAA ATPase family. This sequence in the C-terminal section; belongs to the peptidase M41 family. In terms of assembly, homohexamer. Requires Zn(2+) as cofactor.

The protein resides in the cell inner membrane. Its function is as follows. Acts as a processive, ATP-dependent zinc metallopeptidase for both cytoplasmic and membrane proteins. Plays a role in the quality control of integral membrane proteins. This is ATP-dependent zinc metalloprotease FtsH 3 from Petrotoga mobilis (strain DSM 10674 / SJ95).